The sequence spans 425 residues: Putative dipeptidase MGYG_00085 (425 aa).

The signal sequence occupies residues 1–31 (MAPERRSRLSETAGLFVSLLALTSIVPVQAV). Zn(2+)-binding residues include His56, Asp58, and Glu168. Residues Cys107 and Cys197 are joined by a disulfide bond. His195 is a substrate binding site. His239 and His260 together coordinate Zn(2+). Residues Arg271 and Asp331 each contribute to the substrate site. Residue Asn403 is glycosylated (N-linked (GlcNAc...) asparagine).

This sequence belongs to the metallo-dependent hydrolases superfamily. Peptidase M19 family. Requires Zn(2+) as cofactor.

The catalysed reaction is an L-aminoacyl-L-amino acid + H2O = 2 an L-alpha-amino acid. Its function is as follows. Hydrolyzes a wide range of dipeptides. The protein is Putative dipeptidase MGYG_00085 of Arthroderma gypseum (strain ATCC MYA-4604 / CBS 118893) (Microsporum gypseum).